A 239-amino-acid chain; its full sequence is RNA chaperone ProQ (239 aa).

A disordered region spans residues 107 to 177 (KARVQAQRAE…RKPVAKPVQA (71 aa)). Over residues 115–137 (AEQRAKKREAENVAAGEKNERPT) the composition is skewed to basic and acidic residues.

This sequence belongs to the ProQ family.

The protein resides in the cytoplasm. RNA chaperone with significant RNA binding, RNA strand exchange and RNA duplexing activities. May regulate ProP activity through an RNA-based, post-transcriptional mechanism. The chain is RNA chaperone ProQ from Photorhabdus laumondii subsp. laumondii (strain DSM 15139 / CIP 105565 / TT01) (Photorhabdus luminescens subsp. laumondii).